The chain runs to 71 residues: uncharacterized protein (71 aa).

This is an uncharacterized protein from Autographa californica nuclear polyhedrosis virus (AcMNPV).